A 162-amino-acid polypeptide reads, in one-letter code: Cyclic pyranopterin monophosphate synthase (162 aa).

Substrate-binding positions include 75–77 (MCH) and 116–117 (ME). D131 is a catalytic residue.

The protein belongs to the MoaC family. In terms of assembly, homohexamer; trimer of dimers.

It carries out the reaction (8S)-3',8-cyclo-7,8-dihydroguanosine 5'-triphosphate = cyclic pyranopterin phosphate + diphosphate. Its pathway is cofactor biosynthesis; molybdopterin biosynthesis. Its function is as follows. Catalyzes the conversion of (8S)-3',8-cyclo-7,8-dihydroguanosine 5'-triphosphate to cyclic pyranopterin monophosphate (cPMP). The polypeptide is Cyclic pyranopterin monophosphate synthase (Staphylococcus epidermidis (strain ATCC 35984 / DSM 28319 / BCRC 17069 / CCUG 31568 / BM 3577 / RP62A)).